Consider the following 64-residue polypeptide: Alpha-conotoxin-like Ac1.1b (64 aa).

An N-terminal signal peptide occupies residues 1–21 (MGMRMMFTLFLLVVLTTTVVS). The propeptide occupies 22 to 47 (FPSDSASDGRDDEAKDERSDMYKSKR). The interval 23–46 (PSDSASDGRDDEAKDERSDMYKSK) is disordered. Residues 28-44 (SDGRDDEAKDERSDMYK) show a composition bias toward basic and acidic residues. 2 cysteine pairs are disulfide-bonded: Cys51/Cys56 and Cys52/Cys62. A Cysteine amide modification is found at Cys62.

Belongs to the conotoxin A superfamily. In terms of tissue distribution, expressed by the venom duct.

It localises to the secreted. Functionally, alpha-conotoxins act on postsynaptic membranes, they bind to the nicotinic acetylcholine receptors (nAChR) and thus inhibit them. The sequence is that of Alpha-conotoxin-like Ac1.1b from Conus achatinus (Little frog cone).